The following is a 556-amino-acid chain: Formate--tetrahydrofolate ligase (556 aa).

65–72 (TPAGEGKS) is an ATP binding site.

The protein belongs to the formate--tetrahydrofolate ligase family.

The catalysed reaction is (6S)-5,6,7,8-tetrahydrofolate + formate + ATP = (6R)-10-formyltetrahydrofolate + ADP + phosphate. The protein operates within one-carbon metabolism; tetrahydrofolate interconversion. The sequence is that of Formate--tetrahydrofolate ligase from Clostridium botulinum (strain Alaska E43 / Type E3).